A 505-amino-acid polypeptide reads, in one-letter code: Deoxyguanosinetriphosphate triphosphohydrolase (505 aa).

An HD domain is found at 66–273 (RLTHSMEVQQ…MEAADDISYC (208 aa)).

This sequence belongs to the dGTPase family. Type 1 subfamily. As to quaternary structure, homotetramer. Requires Mg(2+) as cofactor.

The enzyme catalyses dGTP + H2O = 2'-deoxyguanosine + triphosphate + H(+). In terms of biological role, dGTPase preferentially hydrolyzes dGTP over the other canonical NTPs. This chain is Deoxyguanosinetriphosphate triphosphohydrolase, found in Salmonella enteritidis PT4 (strain P125109).